Reading from the N-terminus, the 747-residue chain is MTLITRVLNGNLPLRLSTLKAARQLQCGYSSHAKYAEHKPIERIRNIGISAHIDSGKTTLTERILFYTGRIAEMHEVRGKDNVGATMDSMELERQRGITIQSAATYTVWKDVNINIIDTPGHVDFTVEVERALRVLDGAVLVLCAVGGVQSQTLTVNRQMKRYNVPCLAFINKLDRMGSNPYRVLSQMRSKLNHNAAFIQLPIGVENNCKGIVDLVQERAIYFEGEHGINLRLDEIPQDMRVESQERRQELIEHLSNADETLGELFLEEKPFTEADIKAALRRTCIKRTFTPVLVGTALKNKGVQPLLDAVVDYLPNPGEVENLAYIEQEGQEKQQIVLNPARDGKDPFMGLAFKLEAGRFGQLTYLRCYQGALRKGDNIYNARNHKKVRIARLVRLHSNQMEDVNEVFAGDIFALFGVDCASGDTFTTNPKNNMSMESIFVPEPVVSMAIKPNNTKDRDNFSKAIARFTKEDPTFHFKFDNDIKETLVSGMGELHLEIYAQRMEREYGCPVTLGKPKVAFRETLVGPCEFDYLHKKQSGGSGQYARIIGVMEPLPPSQNTLLEFVDETVGTNVPKQFVPGVEKGYREMCERGMLSGHKLSGIRFRLQDGGHHIVDSSELAFMLAAHGAVKEVFQNGAWQILEPIMLVEVTAPEEFQGAVMGHLSKRHGIITGTEGTEGWFTVYAEVPLNDMFGYASELRSSTQGKGEFTMEYSRYSPCLPDVQEQIVRQYQESQGLGQPEKKKKKN.

The transit peptide at M1–H32 directs the protein to the mitochondrion. A tr-type G domain is found at E42–G319. Residues A51–T58, D118–H122, and N172–D175 each bind GTP.

This sequence belongs to the TRAFAC class translation factor GTPase superfamily. Classic translation factor GTPase family. EF-G/EF-2 subfamily.

Its subcellular location is the mitochondrion. It participates in protein biosynthesis; polypeptide chain elongation. In terms of biological role, mitochondrial GTPase that catalyzes the GTP-dependent ribosomal translocation step during translation elongation. During this step, the ribosome changes from the pre-translocational (PRE) to the post-translocational (POST) state as the newly formed A-site-bound peptidyl-tRNA and P-site-bound deacylated tRNA move to the P and E sites, respectively. Catalyzes the coordinated movement of the two tRNA molecules, the mRNA and conformational changes in the ribosome. Essential during development as it acts as a retrograde signal from mitochondria to the nucleus to slow down cell proliferation if mitochondrial energy output is low. The protein is Elongation factor G, mitochondrial of Drosophila mojavensis (Fruit fly).